The chain runs to 211 residues: Endo-1,4-beta-xylanase 6 (211 aa).

A signal peptide spans 1 to 16 (MKVTAAFAGLLVTALA). The 192-residue stretch at 19 to 210 (APEPVLVSRS…GAGSASVTIS (192 aa)) folds into the GH11 domain. E106 serves as the catalytic Nucleophile. The active-site Proton donor is the E197.

The protein belongs to the glycosyl hydrolase 11 (cellulase G) family.

The protein localises to the secreted. The enzyme catalyses Endohydrolysis of (1-&gt;4)-beta-D-xylosidic linkages in xylans.. The protein operates within glycan degradation; xylan degradation. Functionally, endo-1,4-beta-xylanase involved in the hydrolysis of xylan, a major structural heterogeneous polysaccharide found in plant biomass representing the second most abundant polysaccharide in the biosphere, after cellulose. In Aspergillus niger, this protein is Endo-1,4-beta-xylanase 6 (XYN6).